Here is a 275-residue protein sequence, read N- to C-terminus: Transmembrane protein 106B (275 aa).

Positions 1-24 (MGKSFSHLPLHSNKEDGYDGMTST) are disordered. The N-myristoyl glycine moiety is linked to residue G2. The Cytoplasmic portion of the chain corresponds to 2-97 (GKSFSHLPLH…QRLRPRRTKL (96 aa)). The chain crosses the membrane as a helical span at residues 98-118 (YVMASVFVCLLLSGLAVFFLF). The Lumenal segment spans residues 119–275 (PRSIDVKYIG…EYLNVLQPQQ (157 aa)). N146, N152, N165, and N184 each carry an N-linked (GlcNAc...) asparagine glycan. C215 and C254 are joined by a disulfide. N257 carries an N-linked (GlcNAc...) asparagine glycan.

It belongs to the TMEM106 family. As to quaternary structure, can form homomers. Interacts (via N-terminus) with MAP6 (via C-terminus). Interacts (via C-terminus) with the vacuolar-type ATPase subunit ATP6AP1. Interacts (via N-terminus) with AP2M1 and CLTC. Interacts with TMEM106C.

Its subcellular location is the late endosome membrane. The protein resides in the lysosome membrane. It localises to the cell membrane. Its function is as follows. In neurons, involved in the transport of late endosomes/lysosomes. May be involved in dendrite morphogenesis and maintenance by regulating lysosomal trafficking. May act as a molecular brake for retrograde transport of late endosomes/lysosomes, possibly via its interaction with MAP6. In motoneurons, may mediate the axonal transport of lysosomes and axonal sorting at the initial segment. It remains unclear whether TMEM106B affects the transport of moving lysosomes in the anterograde or retrograde direction in neurites and whether it is particularly important in the sorting of lysosomes in axons or in dendrites. In neurons, may also play a role in the regulation of lysosomal size and responsiveness to stress. Required for proper lysosomal acidification. This Bos taurus (Bovine) protein is Transmembrane protein 106B (TMEM106B).